We begin with the raw amino-acid sequence, 78 residues long: Acyl carrier protein (78 aa).

A Carrier domain is found at S2–Q77. S37 is subject to O-(pantetheine 4'-phosphoryl)serine.

Belongs to the acyl carrier protein (ACP) family. 4'-phosphopantetheine is transferred from CoA to a specific serine of apo-ACP by AcpS. This modification is essential for activity because fatty acids are bound in thioester linkage to the sulfhydryl of the prosthetic group.

Its subcellular location is the cytoplasm. The protein operates within lipid metabolism; fatty acid biosynthesis. Its function is as follows. Carrier of the growing fatty acid chain in fatty acid biosynthesis. The polypeptide is Acyl carrier protein (Pseudomonas putida (strain ATCC 700007 / DSM 6899 / JCM 31910 / BCRC 17059 / LMG 24140 / F1)).